Consider the following 375-residue polypeptide: Alanine racemase (375 aa).

The active-site Proton acceptor; specific for D-alanine is the lysine 35. Position 35 is an N6-(pyridoxal phosphate)lysine (lysine 35). Residue arginine 133 coordinates substrate. Tyrosine 261 (proton acceptor; specific for L-alanine) is an active-site residue. Methionine 309 contributes to the substrate binding site.

Belongs to the alanine racemase family. It depends on pyridoxal 5'-phosphate as a cofactor.

It catalyses the reaction L-alanine = D-alanine. The protein operates within amino-acid biosynthesis; D-alanine biosynthesis; D-alanine from L-alanine: step 1/1. Catalyzes the interconversion of L-alanine and D-alanine. May also act on other amino acids. This Syntrophobacter fumaroxidans (strain DSM 10017 / MPOB) protein is Alanine racemase (alr).